Consider the following 507-residue polypeptide: ATP synthase subunit alpha, chloroplastic (507 aa).

170–177 (GDRQTGKT) contributes to the ATP binding site.

The protein belongs to the ATPase alpha/beta chains family. In terms of assembly, F-type ATPases have 2 components, CF(1) - the catalytic core - and CF(0) - the membrane proton channel. CF(1) has five subunits: alpha(3), beta(3), gamma(1), delta(1), epsilon(1). CF(0) has four main subunits: a, b, b' and c.

It localises to the plastid. The protein resides in the chloroplast thylakoid membrane. The catalysed reaction is ATP + H2O + 4 H(+)(in) = ADP + phosphate + 5 H(+)(out). Functionally, produces ATP from ADP in the presence of a proton gradient across the membrane. The alpha chain is a regulatory subunit. This is ATP synthase subunit alpha, chloroplastic from Buxus microphylla (Littleleaf boxwood).